The chain runs to 111 residues: Transcription factor S (111 aa).

Residues cysteine 4, cysteine 7, cysteine 24, cysteine 27, cysteine 72, cysteine 75, cysteine 100, and cysteine 103 each coordinate Zn(2+). The segment at 4-27 (CPKCGSMMMPRKENGKTVYKCSKC) adopts a C4-type zinc-finger fold. A TFIIS-type zinc finger spans residues 68 to 108 (RGISCPSCGNDEAYFWILQTRSADEPATRFYKCTKCGKVWR).

This sequence belongs to the archaeal RpoM/eukaryotic RPA12/RPB9/RPC11 RNA polymerase family.

Its function is as follows. Induces RNA cleavage activity in the RNA polymerase. In its presence, the cleavage activity of the RNA polymerase truncates the RNA back to position +15 in a stepwise manner by releasing mainly dinucleotides from the 3'-end of the nascent RNA. The truncated RNAs are able to continue elongation. Involved in transcriptional proofreading and fidelity. Misincorporation of nucleotides during elongation of transcription leads to arrested elongation complexes which are rescued by TFS-promoted removal of a dinucleotide from the 3'-end. TFS is able to induce a cleavage resynthesis cycle in stalled elongation complexes (resulting from the next missing nucleotide or a reduced incorporation rate of a wrong nucleotide) preventing misincorporation and enabling proofreading in a post-incorporation manner. Pausing of elongation complexes is the main determinant of TFS-induced RNA cleavage. This chain is Transcription factor S, found in Sulfolobus acidocaldarius (strain ATCC 33909 / DSM 639 / JCM 8929 / NBRC 15157 / NCIMB 11770).